A 632-amino-acid polypeptide reads, in one-letter code: DNA mismatch repair protein MutL (632 aa).

Belongs to the DNA mismatch repair MutL/HexB family.

This protein is involved in the repair of mismatches in DNA. It is required for dam-dependent methyl-directed DNA mismatch repair. May act as a 'molecular matchmaker', a protein that promotes the formation of a stable complex between two or more DNA-binding proteins in an ATP-dependent manner without itself being part of a final effector complex. This is DNA mismatch repair protein MutL from Pseudomonas putida (strain GB-1).